The primary structure comprises 530 residues: NAD(+) kinase (530 aa).

3 disordered regions span residues 1 to 27, 57 to 99, and 486 to 530; these read MKENDMNNGVDKWVNEEDGRNDHHNNN, ISSE…KSSN, and SLEA…RFSV. Positions 13 to 25 are enriched in basic and acidic residues; sequence WVNEEDGRNDHHN. Over residues 59–75 the composition is skewed to low complexity; that stretch reads SESSSRRSSLLNKDSSL. Polar residues predominate over residues 88-99; that stretch reads INGTRGSSKSSN. A phosphoserine mark is found at Ser499 and Ser503. The segment covering 499–508 has biased composition (acidic residues); the sequence is SDDESDDESV.

It belongs to the NAD kinase family. Homohexamer.

It carries out the reaction NAD(+) + ATP = ADP + NADP(+) + H(+). In terms of biological role, specifically phosphorylates NAD in the presence of ATP, dATP, or CTP as phosphoryl donors. This chain is NAD(+) kinase (UTR1), found in Saccharomyces cerevisiae (strain ATCC 204508 / S288c) (Baker's yeast).